We begin with the raw amino-acid sequence, 103 residues long: Large ribosomal subunit protein bL21 (103 aa).

The protein belongs to the bacterial ribosomal protein bL21 family. In terms of assembly, part of the 50S ribosomal subunit. Contacts protein L20.

In terms of biological role, this protein binds to 23S rRNA in the presence of protein L20. This is Large ribosomal subunit protein bL21 from Yersinia enterocolitica serotype O:8 / biotype 1B (strain NCTC 13174 / 8081).